The primary structure comprises 264 residues: Ribosomal RNA small subunit methyltransferase J (264 aa).

Residues 111-112, 127-128, and D180 contribute to the S-adenosyl-L-methionine site; these read RD and ER.

It belongs to the methyltransferase superfamily. RsmJ family.

The protein resides in the cytoplasm. The enzyme catalyses guanosine(1516) in 16S rRNA + S-adenosyl-L-methionine = N(2)-methylguanosine(1516) in 16S rRNA + S-adenosyl-L-homocysteine + H(+). Specifically methylates the guanosine in position 1516 of 16S rRNA. This chain is Ribosomal RNA small subunit methyltransferase J, found in Alkalilimnicola ehrlichii (strain ATCC BAA-1101 / DSM 17681 / MLHE-1).